The sequence spans 452 residues: Bifunctional protein GlmU (452 aa).

Positions M1–K232 are pyrophosphorylase. UDP-N-acetyl-alpha-D-glucosamine contacts are provided by residues L11–G14, K25, Q78, and G83–T84. D108 is a Mg(2+) binding site. G144, E158, N173, and N230 together coordinate UDP-N-acetyl-alpha-D-glucosamine. N230 provides a ligand contact to Mg(2+). The tract at residues A233 to A253 is linker. Positions G254–S452 are N-acetyltransferase. The UDP-N-acetyl-alpha-D-glucosamine site is built by R319 and K337. The active-site Proton acceptor is H349. Positions 352 and 363 each coordinate UDP-N-acetyl-alpha-D-glucosamine. Residues A366, N372–Y373, S391, S409, and R426 contribute to the acetyl-CoA site.

It in the N-terminal section; belongs to the N-acetylglucosamine-1-phosphate uridyltransferase family. This sequence in the C-terminal section; belongs to the transferase hexapeptide repeat family. As to quaternary structure, homotrimer. Mg(2+) is required as a cofactor.

It localises to the cytoplasm. It carries out the reaction alpha-D-glucosamine 1-phosphate + acetyl-CoA = N-acetyl-alpha-D-glucosamine 1-phosphate + CoA + H(+). The enzyme catalyses N-acetyl-alpha-D-glucosamine 1-phosphate + UTP + H(+) = UDP-N-acetyl-alpha-D-glucosamine + diphosphate. It functions in the pathway nucleotide-sugar biosynthesis; UDP-N-acetyl-alpha-D-glucosamine biosynthesis; N-acetyl-alpha-D-glucosamine 1-phosphate from alpha-D-glucosamine 6-phosphate (route II): step 2/2. It participates in nucleotide-sugar biosynthesis; UDP-N-acetyl-alpha-D-glucosamine biosynthesis; UDP-N-acetyl-alpha-D-glucosamine from N-acetyl-alpha-D-glucosamine 1-phosphate: step 1/1. Its pathway is bacterial outer membrane biogenesis; LPS lipid A biosynthesis. In terms of biological role, catalyzes the last two sequential reactions in the de novo biosynthetic pathway for UDP-N-acetylglucosamine (UDP-GlcNAc). The C-terminal domain catalyzes the transfer of acetyl group from acetyl coenzyme A to glucosamine-1-phosphate (GlcN-1-P) to produce N-acetylglucosamine-1-phosphate (GlcNAc-1-P), which is converted into UDP-GlcNAc by the transfer of uridine 5-monophosphate (from uridine 5-triphosphate), a reaction catalyzed by the N-terminal domain. This Rhodopseudomonas palustris (strain BisB5) protein is Bifunctional protein GlmU.